A 232-amino-acid polypeptide reads, in one-letter code: Homeobox protein Rhox13 (232 aa).

The tract at residues 45-114 (QAAVASSHDS…EAAAPSVAAV (70 aa)) is disordered. Residues 68-105 (SDSESESDSESESDSSDSSDESDDDSSTSDEDTSDPEE) show a composition bias toward acidic residues. The segment at residues 148-207 (RRGPPFHFAQWQVEEMESLFEETQYPDLLTRGELARTLNVPEVKVKVWFTNRRAKQRKIE) is a DNA-binding region (homeobox).

It belongs to the paired-like homeobox family.

The protein resides in the nucleus. In terms of biological role, probable transcription factor. This Mus musculus (Mouse) protein is Homeobox protein Rhox13.